The primary structure comprises 37 residues: Esculentin-2HSa (37 aa).

A disulfide bridge links Cys31 with Cys37.

In terms of tissue distribution, expressed by the skin glands.

It localises to the secreted. In terms of biological role, has antibacterial activity against the Gram-positive bacterium S.aureus ATCC 25923 (MIC=32 uM) and the Gram-negative bacterium E.coli ATCC 25726 (MIC=16 uM). This Odorrana hosii (Hose's rock frog) protein is Esculentin-2HSa.